A 289-amino-acid chain; its full sequence is Rhodopsin (289 aa).

At 1–7 (YLVNPAA) the chain is on the extracellular side. Residues 8–32 (YAALGAYMFLLILIGFPINFLTLYV) traverse the membrane as a helical segment. At 33–44 (TLEHKKLRTPLN) the chain is on the cytoplasmic side. A helical membrane pass occupies residues 45–67 (YILLNLAVANLFMVLGGFTTTMY). The Extracellular portion of the chain corresponds to 68-81 (TSMHGYFVLGRLGC). A disulfide bond links C81 and C158. Residues 82 to 104 (NLEAFFATLGGEIALWSLVVLAI) form a helical membrane-spanning segment. A 'Ionic lock' involved in activated form stabilization motif is present at residues 105 to 107 (ERW). Residues 105 to 123 (ERWIVVCKPISNFRFTEDH) lie on the Cytoplasmic side of the membrane. Residues 124–144 (AIMGLAFTWVMALACAVPPLV) form a helical membrane-spanning segment. Topologically, residues 145–173 (GWSRYIPEGMQCSCGVDYYTRAEGFNNES) are extracellular. A glycan (N-linked (GlcNAc...) asparagine) is linked at N171. The chain crosses the membrane as a helical span at residues 174-195 (FVIYMFIVHFLIPLSVIFFCYG). The Cytoplasmic segment spans residues 196–223 (RLLCAVKEAPAAQQESETTQRAEKEVSR). A helical transmembrane segment spans residues 224-245 (MVVIMVIGFLVCWLPYASVAWW). Over 246–257 (IFCNQGSDFGPI) the chain is Extracellular. A helical membrane pass occupies residues 258–279 (FMTLPSFFAKSAAIYNPMIYIC). Position 267 is an N6-(retinylidene)lysine (K267). The Cytoplasmic segment spans residues 280–289 (MNKQFRHCMI).

It belongs to the G-protein coupled receptor 1 family. Opsin subfamily. Post-translationally, phosphorylated on some or all of the serine and threonine residues present in the C-terminal region. In terms of processing, contains one covalently linked retinal chromophore.

The protein localises to the membrane. It localises to the cell projection. It is found in the cilium. Its subcellular location is the photoreceptor outer segment. In terms of biological role, photoreceptor required for image-forming vision at low light intensity. While most salt water fish species use retinal as chromophore, most freshwater fish use 3-dehydroretinal, or a mixture of retinal and 3-dehydroretinal. Light-induced isomerization of 11-cis to all-trans retinal triggers a conformational change that activates signaling via G-proteins. Subsequent receptor phosphorylation mediates displacement of the bound G-protein alpha subunit by arrestin and terminates signaling. In Abyssocottus korotneffi (Baikalian deep-water sculpin), this protein is Rhodopsin (rho).